We begin with the raw amino-acid sequence, 472 residues long: ATP synthase subunit beta (472 aa).

157 to 164 (GGAGVGKT) lines the ATP pocket.

It belongs to the ATPase alpha/beta chains family. As to quaternary structure, F-type ATPases have 2 components, CF(1) - the catalytic core - and CF(0) - the membrane proton channel. CF(1) has five subunits: alpha(3), beta(3), gamma(1), delta(1), epsilon(1). CF(0) has three main subunits: a(1), b(2) and c(9-12). The alpha and beta chains form an alternating ring which encloses part of the gamma chain. CF(1) is attached to CF(0) by a central stalk formed by the gamma and epsilon chains, while a peripheral stalk is formed by the delta and b chains.

The protein localises to the cell inner membrane. It carries out the reaction ATP + H2O + 4 H(+)(in) = ADP + phosphate + 5 H(+)(out). In terms of biological role, produces ATP from ADP in the presence of a proton gradient across the membrane. The catalytic sites are hosted primarily by the beta subunits. This Desulfatibacillum aliphaticivorans protein is ATP synthase subunit beta.